Consider the following 469-residue polypeptide: Glutamate--tRNA ligase 1 (469 aa).

The short motif at 10 to 20 (PSPTGYLHIGG) is the 'HIGH' region element. Zn(2+) contacts are provided by Cys-99, Cys-101, Cys-126, and Asp-128. Positions 237–241 (RLSKR) match the 'KMSKS' region motif. Lys-240 is an ATP binding site.

It belongs to the class-I aminoacyl-tRNA synthetase family. Glutamate--tRNA ligase type 1 subfamily. As to quaternary structure, monomer. Requires Zn(2+) as cofactor.

It localises to the cytoplasm. It carries out the reaction tRNA(Glu) + L-glutamate + ATP = L-glutamyl-tRNA(Glu) + AMP + diphosphate. Its function is as follows. Catalyzes the attachment of glutamate to tRNA(Glu) in a two-step reaction: glutamate is first activated by ATP to form Glu-AMP and then transferred to the acceptor end of tRNA(Glu). The protein is Glutamate--tRNA ligase 1 of Coxiella burnetii (strain CbuK_Q154) (Coxiella burnetii (strain Q154)).